Here is a 171-residue protein sequence, read N- to C-terminus: S-ribosylhomocysteine lyase (171 aa).

Fe cation contacts are provided by H54, H58, and C128.

It belongs to the LuxS family. As to quaternary structure, homodimer. It depends on Fe cation as a cofactor.

It catalyses the reaction S-(5-deoxy-D-ribos-5-yl)-L-homocysteine = (S)-4,5-dihydroxypentane-2,3-dione + L-homocysteine. Its function is as follows. Involved in the synthesis of autoinducer 2 (AI-2) which is secreted by bacteria and is used to communicate both the cell density and the metabolic potential of the environment. The regulation of gene expression in response to changes in cell density is called quorum sensing. Catalyzes the transformation of S-ribosylhomocysteine (RHC) to homocysteine (HC) and 4,5-dihydroxy-2,3-pentadione (DPD). The chain is S-ribosylhomocysteine lyase from Enterobacter sp. (strain 638).